Consider the following 304-residue polypeptide: Taste receptor type 2 member 4 (304 aa).

Residues 1–10 are Extracellular-facing; the sequence is MLWELYAFVF. A helical transmembrane segment spans residues 11–31; sequence AASVVFNFVGIVANLFIIVII. Residues 32–46 are Cytoplasmic-facing; sequence SKTWVKSHKISSSDK. A helical transmembrane segment spans residues 47–67; sequence ILFSLAITRFLTLGLFLLNTV. Over 68 to 80 the chain is Extracellular; it reads YIATNTGRSVYFS. A helical transmembrane segment spans residues 81–101; that stretch reads TFFLLCWKFLDSNSLWLVTFL. At 102–128 the chain is on the cytoplasmic side; the sequence is NCLYCVKITHFQHPVFLLLKRTVSMKT. The helical transmembrane segment at 129 to 149 threads the bilayer; sequence TSLLLACLLISAFTTLLYFVL. The Extracellular portion of the chain corresponds to 150 to 171; the sequence is TQISRFPEHIIGRNDTLFDVSD. Asn163 is a glycosylation site (N-linked (GlcNAc...) asparagine). A helical membrane pass occupies residues 172–192; that stretch reads GILTLAASLILSSLLQFLLNV. The Cytoplasmic segment spans residues 193–229; that stretch reads TFASLLIHSLRRHVQKMQRNRSSFWNPQTEAHVGAMR. Residues 230-250 form a helical membrane-spanning segment; sequence LMICFLVLYIPYSIAALLYFP. Over 251–260 the chain is Extracellular; the sequence is SYMRKNLRAQ. Residues 261–281 traverse the membrane as a helical segment; the sequence is AACMIITAAYPPGHSILLIIT. The Cytoplasmic segment spans residues 282–304; that stretch reads HHKLKAKAKKICCFYKLRDFVSN.

This sequence belongs to the G-protein coupled receptor T2R family. In terms of tissue distribution, expressed in tongue, stomach and duodenum.

It is found in the membrane. The protein localises to the cell projection. It localises to the cilium membrane. In terms of biological role, gustducin-coupled receptor implicated in the perception of bitter compounds in the oral cavity and the gastrointestinal tract. Signals through PLCB2 and the calcium-regulated cation channel TRPM5. In airway epithelial cells, binding of denatonium increases the intracellular calcium ion concentration and stimulates ciliary beat frequency. This chain is Taste receptor type 2 member 4, found in Rattus norvegicus (Rat).